A 678-amino-acid chain; its full sequence is UvrABC system protein C (678 aa).

Residues 16 to 95 (VEPGVYRFRD…IKEFDPRFNI (80 aa)) form the GIY-YIG domain. One can recognise a UVR domain in the interval 208–243 (DRLIREMEQQMTAAAEDLDFERAARLRDNIGAMRRA). Low complexity predominate over residues 649-667 (EAPPEPGAEAPPDSGAAAA). A disordered region spans residues 649–678 (EAPPEPGAEAPPDSGAAAAVMGNDQSRVPG).

The protein belongs to the UvrC family. As to quaternary structure, interacts with UvrB in an incision complex.

It is found in the cytoplasm. Its function is as follows. The UvrABC repair system catalyzes the recognition and processing of DNA lesions. UvrC both incises the 5' and 3' sides of the lesion. The N-terminal half is responsible for the 3' incision and the C-terminal half is responsible for the 5' incision. The sequence is that of UvrABC system protein C from Mycolicibacterium gilvum (strain PYR-GCK) (Mycobacterium gilvum (strain PYR-GCK)).